A 1353-amino-acid polypeptide reads, in one-letter code: Xanthine dehydrogenase (1353 aa).

The 88-residue stretch at 17 to 104 (STLIFFVNGK…GSAVTTVEGI (88 aa)) folds into the 2Fe-2S ferredoxin-type domain. [2Fe-2S] cluster contacts are provided by cysteine 56, cysteine 61, cysteine 64, cysteine 86, cysteine 126, cysteine 129, cysteine 161, and cysteine 163. The region spanning 245–434 (YKGERATWYR…VGLYFPKTLE (190 aa)) is the FAD-binding PCMH-type domain. Residues 273-280 (LVVGNTEI), phenylalanine 353, 363-367 (SLGGN), aspartate 376, leucine 424, and lysine 442 contribute to the FAD site. Positions 790 and 821 each coordinate Mo-molybdopterin. Positions 825 and 903 each coordinate substrate. Arginine 935 contacts Mo-molybdopterin. Substrate is bound at residue phenylalanine 937. Mo-molybdopterin is bound at residue alanine 1102. Glutamate 1285 serves as the catalytic Proton acceptor.

The protein belongs to the xanthine dehydrogenase family. As to quaternary structure, homodimer. It depends on FAD as a cofactor. Mo-molybdopterin serves as cofactor. Requires [2Fe-2S] cluster as cofactor.

Its subcellular location is the peroxisome. It catalyses the reaction xanthine + NAD(+) + H2O = urate + NADH + H(+). The enzyme catalyses hypoxanthine + NAD(+) + H2O = xanthine + NADH + H(+). Its function is as follows. Key enzyme in purine degradation. Catalyzes the oxidation of hypoxanthine to xanthine. Catalyzes the oxidation of xanthine to uric acid. The protein is Xanthine dehydrogenase (XDH) of Calliphora vicina (Blue blowfly).